We begin with the raw amino-acid sequence, 457 residues long: Multidrug resistance protein MdtK (457 aa).

Helical transmembrane passes span 11-31 (LLALAIPVILAQIAQTAMGFV), 53-73 (IWLPAILFGHGLLLALTPVIA), 93-113 (WLAGFVSVLIMLVLWNAGYII), 127-147 (AVGYLRALLWGAPGYLFFQVA), 160-180 (GMVMGFIGLLVNIPVNYIFIY), 189-209 (GGVGCGVATAAVYWVMFLAMV), 243-263 (LPIALALFFEVTLFAVVALLV), 276-296 (IALNFSSLMFVLPMSLAAAVT), 314-334 (AARTGLMVGVCMATLTAIFTV), 350-370 (VVTLAAHLMLLAAVYQISDSI), 387-407 (IFYITFTAYWVLGLPSGYILA), and 418-438 (PAGFWIGFIIGLTSAAIMMML).

It belongs to the multi antimicrobial extrusion (MATE) (TC 2.A.66.1) family. MdtK subfamily.

It is found in the cell inner membrane. Its function is as follows. Multidrug efflux pump that functions probably as a Na(+)/drug antiporter. The polypeptide is Multidrug resistance protein MdtK (Escherichia coli O45:K1 (strain S88 / ExPEC)).